The following is a 471-amino-acid chain: Uronate isomerase (471 aa).

This sequence belongs to the metallo-dependent hydrolases superfamily. Uronate isomerase family.

It catalyses the reaction D-glucuronate = D-fructuronate. It carries out the reaction aldehydo-D-galacturonate = keto-D-tagaturonate. The protein operates within carbohydrate metabolism; pentose and glucuronate interconversion. In Cellvibrio japonicus (strain Ueda107) (Pseudomonas fluorescens subsp. cellulosa), this protein is Uronate isomerase.